The primary structure comprises 127 residues: Small ribosomal subunit protein uS12 (127 aa).

At Asp-89 the chain carries 3-methylthioaspartic acid. Residues 104-127 form a disordered region; the sequence is TQGVKDRKQARSKYGTKRAKAGKK. Residues 113–127 are compositionally biased toward basic residues; the sequence is ARSKYGTKRAKAGKK.

The protein belongs to the universal ribosomal protein uS12 family. As to quaternary structure, part of the 30S ribosomal subunit. Contacts proteins S8 and S17. May interact with IF1 in the 30S initiation complex.

In terms of biological role, with S4 and S5 plays an important role in translational accuracy. Functionally, interacts with and stabilizes bases of the 16S rRNA that are involved in tRNA selection in the A site and with the mRNA backbone. Located at the interface of the 30S and 50S subunits, it traverses the body of the 30S subunit contacting proteins on the other side and probably holding the rRNA structure together. The combined cluster of proteins S8, S12 and S17 appears to hold together the shoulder and platform of the 30S subunit. In Herminiimonas arsenicoxydans, this protein is Small ribosomal subunit protein uS12.